Consider the following 303-residue polypeptide: Elongation factor Ts (303 aa).

The interval 79–82 (TDFT) is involved in Mg(2+) ion dislocation from EF-Tu.

This sequence belongs to the EF-Ts family.

It is found in the cytoplasm. Its function is as follows. Associates with the EF-Tu.GDP complex and induces the exchange of GDP to GTP. It remains bound to the aminoacyl-tRNA.EF-Tu.GTP complex up to the GTP hydrolysis stage on the ribosome. In Magnetococcus marinus (strain ATCC BAA-1437 / JCM 17883 / MC-1), this protein is Elongation factor Ts.